Reading from the N-terminus, the 943-residue chain is MEYNFREIEKKWQKIWVDNHTYQVNEDASKQKFYVLNMFPYPSGAGLHVGHPLGYIASDIYARYKRLQGFNVLNPMGYDAYGLPAEQYAIQTGQHPAITTVNNINRYREQLDKIGFSFDWNREIRTCDPEYYHWTQWAFIKMFNSYYCNDEKQARPIEELIEAFSTNGTQGMNVACGEEMDFTADEWNAKSEKEQQEILMNYRIAYLGNTMVNWCPALGTVLANDEVVDGVSERGGYPVIQKVMRQWCLRVSAYAQRLLDGLETVEWTDSLKETQRNWIGRSEGAEMNFKVKDSDIEFTIFTTRADTVFGVTFMVLAPESELVAKLTTPEQKAEVDAYLDRTKKRTERERIADRSVSGVFSGSYAINPLTNEPIPVWISDYVLAGYGTGAIMAVPAHDSRDYAFAKHFNLEIRPLIEGCDVSEESFDAKEGIMMNSPRPGAPEGGLVLNGLTVKEAIAKTKEYIKATGLGRVKVNFRLRDAIFSRQRYWGEPFPVYYKDGMPYMIDESCLPLELPEVAKFLPTETGEPPLGHATKWAWDTVNKCVTDNENIDNITIFPLELNTMPGFAGSSAYYLRYMDPRNHEALVSPAVDQYWKNVDLYVGGTEHATGHLIYSRFWNKFLHDWGISVAEEPFQKLVNQGMIQGRSNFVYRIKDTNTFVSLNLKDQYEVTPIHVDVNIVSNDILDLEAFKAWRPEYETAEFILEDGKYICGWAVEKMSKSMFNVVNPDMIVEKYGADTLRMYEMFLGPVEQSKPWDTNGIDGVHRFIKKFWSLFYDRNGEYLVKDEPATKEELKALHKLIKKVTGDIEQFSYNTSVSAFMICVNELSSLKCNKKEVLEQLIVVLAPFAPHVCEELWDTLGSTTSVCDAQWPAFNEQYLVEDTVNYTISFNGKARFNMEFPANAASDAIQATVLADERSLKWTEGKTPKKVIVVPKKIVNIVI.

The 'HIGH' region signature appears at 40 to 51 (PYPSGAGLHVGH). A 'KMSKS' region motif is present at residues 717-721 (KMSKS). Position 720 (lysine 720) interacts with ATP.

The protein belongs to the class-I aminoacyl-tRNA synthetase family.

It localises to the cytoplasm. It catalyses the reaction tRNA(Leu) + L-leucine + ATP = L-leucyl-tRNA(Leu) + AMP + diphosphate. The protein is Leucine--tRNA ligase of Bacteroides fragilis (strain ATCC 25285 / DSM 2151 / CCUG 4856 / JCM 11019 / LMG 10263 / NCTC 9343 / Onslow / VPI 2553 / EN-2).